We begin with the raw amino-acid sequence, 133 residues long: Alcohol dehydrogenase, 15 kDa subunit (133 aa).

An N-terminal signal peptide occupies residues 1 to 24 (MFRRIVPVLGLALGLGLASQAAMA). The interval 23-43 (MAQEQSPPPPPAVQGTPGKDF) is disordered. A Pyrrolidone carboxylic acid modification is found at Gln25.

As to quaternary structure, the alcohol dehydrogenase multicomponent enzyme system is composed of a dehydrogenase subunit I (AdhA), a cytochrome c subunit II (AdhB) and a subunit III (AdhS).

It localises to the cell membrane. Functionally, part of the alcohol dehydrogenase multicomponent enzyme system which is involved in the production of acetic acid and in the ethanol oxidase respiratory chain. Does not play an obligatory role for the alcohol dehydrogenase (ADH) activity. The chain is Alcohol dehydrogenase, 15 kDa subunit from Gluconobacter oxydans (strain 621H) (Gluconobacter suboxydans).